Here is a 169-residue protein sequence, read N- to C-terminus: ATP synthase subunit b (169 aa).

A helical transmembrane segment spans residues 11 to 31 (IPSFIAQIVNFGLLLGLLYLF).

The protein belongs to the ATPase B chain family. F-type ATPases have 2 components, F(1) - the catalytic core - and F(0) - the membrane proton channel. F(1) has five subunits: alpha(3), beta(3), gamma(1), delta(1), epsilon(1). F(0) has three main subunits: a(1), b(2) and c(10-14). The alpha and beta chains form an alternating ring which encloses part of the gamma chain. F(1) is attached to F(0) by a central stalk formed by the gamma and epsilon chains, while a peripheral stalk is formed by the delta and b chains.

The protein localises to the cell membrane. In terms of biological role, f(1)F(0) ATP synthase produces ATP from ADP in the presence of a proton or sodium gradient. F-type ATPases consist of two structural domains, F(1) containing the extramembraneous catalytic core and F(0) containing the membrane proton channel, linked together by a central stalk and a peripheral stalk. During catalysis, ATP synthesis in the catalytic domain of F(1) is coupled via a rotary mechanism of the central stalk subunits to proton translocation. Component of the F(0) channel, it forms part of the peripheral stalk, linking F(1) to F(0). This Dehalococcoides mccartyi (strain ATCC BAA-2100 / JCM 16839 / KCTC 5957 / BAV1) protein is ATP synthase subunit b.